Consider the following 296-residue polypeptide: MVIQWFPGHMAKARRQVTEKLKLIDVVIELVDARLPLSSRNPMIDEIITHKPRLVVLNKADMADDRLTKQWIAYFKEKGHMAISINAQAGQGMKEIAAACKVLVKEKFDKMVAKGIRPRAIRALIVGIPNVGKSTLINKLAKKNIAKTGDRPGVTTAQQWIKVGKEMELLDTPGILWPKFEDQLVGLRLATTGAIKDSILNLQDVAVYALRFMEKHYPERLKERYNLNEIPEDIVELFDAIGKNRGCLMGGGMIDYDKTSELVLRELRGGKLGKMTFETPEEFGEQVEDVEKIEEV.

A CP-type G domain is found at 14–178; it reads RRQVTEKLKL…LLDTPGILWP (165 aa). GTP contacts are provided by residues 58 to 61, 130 to 135, and G174; these read NKAD and NVGKST.

This sequence belongs to the TRAFAC class YlqF/YawG GTPase family. MTG1 subfamily. In terms of assembly, interacts with ctc. Interacts with the immature 50S ribosome subunit. 2 molecules of rbgA bind to one 50S subunit.

Its subcellular location is the cytoplasm. Functionally, essential protein that is required for a late step of 50S ribosomal subunit assembly. Has GTPase activity that is stimulated by interaction with the immature 50S ribosome subunit. Binds to the 23S rRNA. Required for the association of ribosomal proteins rplP and rpmA with the large subunit. This is Ribosome biogenesis GTPase A from Bacillus cereus (strain ATCC 14579 / DSM 31 / CCUG 7414 / JCM 2152 / NBRC 15305 / NCIMB 9373 / NCTC 2599 / NRRL B-3711).